Consider the following 160-residue polypeptide: Probable chemoreceptor glutamine deamidase CheD 1 (160 aa).

It belongs to the CheD family.

It carries out the reaction L-glutaminyl-[protein] + H2O = L-glutamyl-[protein] + NH4(+). Its function is as follows. Probably deamidates glutamine residues to glutamate on methyl-accepting chemotaxis receptors (MCPs), playing an important role in chemotaxis. This chain is Probable chemoreceptor glutamine deamidase CheD 1, found in Syntrophus aciditrophicus (strain SB).